A 301-amino-acid chain; its full sequence is Cardiolipin synthase (CMP-forming) (301 aa).

Residues 70–93 (SGAGKAAPRPAAGAGAAAEAPGGQ) form a disordered region. Residues 71 to 93 (GAGKAAPRPAAGAGAAAEAPGGQ) are compositionally biased toward low complexity. A run of 5 helical transmembrane segments spans residues 109–129 (IPNM…YLII), 133–153 (FNIA…DGFI), 190–212 (IPVP…VFYV), 250–270 (LILV…SIYL), and 272–292 (ILWC…YHYG).

The protein belongs to the CDP-alcohol phosphatidyltransferase class-I family. The cofactor is a divalent metal cation. As to expression, highly expressed in tissues such as heart, skeletal muscle and liver.

It localises to the mitochondrion inner membrane. It catalyses the reaction a CDP-1,2-diacyl-sn-glycerol + a 1,2-diacyl-sn-glycero-3-phospho-(1'-sn-glycerol) = a cardiolipin + CMP + H(+). Its function is as follows. Catalyzes the synthesis of cardiolipin (CL) (diphosphatidylglycerol) by specifically transferring a phosphatidyl group from CDP-diacylglycerol to phosphatidylglycerol (PG). CL is a key phospholipid in mitochondrial membranes and plays important roles in maintaining the functional integrity and dynamics of mitochondria under both optimal and stress conditions. This Homo sapiens (Human) protein is Cardiolipin synthase (CMP-forming) (CRLS1).